The chain runs to 44 residues: Large ribosomal subunit protein bL34 (44 aa).

2 stretches are compositionally biased toward basic residues: residues Met-1–Met-22 and Ile-31–Val-44. Residues Met-1–Val-44 form a disordered region.

It belongs to the bacterial ribosomal protein bL34 family.

The protein is Large ribosomal subunit protein bL34 of Nostoc punctiforme (strain ATCC 29133 / PCC 73102).